The primary structure comprises 335 residues: D-alanine--D-alanine ligase (335 aa).

Positions 124 to 330 (KMWFSALGVP…FTEYLSDVIS (207 aa)) constitute an ATP-grasp domain. 154–209 (AFDTWGSVFIKAASQGSSVGCYKVDVRDNIAKVLEEAFGYAPYVVVEKTIKARELE) is an ATP binding site. Aspartate 284, glutamate 297, and asparagine 299 together coordinate Mg(2+).

Belongs to the D-alanine--D-alanine ligase family. The cofactor is Mg(2+). Mn(2+) is required as a cofactor.

It localises to the cytoplasm. It catalyses the reaction 2 D-alanine + ATP = D-alanyl-D-alanine + ADP + phosphate + H(+). The protein operates within cell wall biogenesis; peptidoglycan biosynthesis. Its function is as follows. Cell wall formation. The chain is D-alanine--D-alanine ligase from Shewanella denitrificans (strain OS217 / ATCC BAA-1090 / DSM 15013).